The sequence spans 111 residues: Dynein light chain Tctex-type (111 aa).

It belongs to the dynein light chain Tctex-type family. The cytoplasmic dynein complex consists of two catalytic heavy chains (HCs) and a number of non-catalytic subunits presented by intermediate chains (ICs), light intermediate chains (LICs) and light chains (LCs).

The protein resides in the cytoplasm. Its subcellular location is the cytoskeleton. In terms of biological role, acts as one of several non-catalytic accessory components of the cytoplasmic dynein complex that are thought to be involved in linking dynein to cargos and to adapter proteins that regulate dynein function. Cytoplasmic dynein acts as a motor for the intracellular retrograde motility of vesicles and organelles along microtubules. Required for spermatid differentiation. Is not required for polarized transport in rhabdomere development and appears to be a non-essential component of the cytoplasmic dynein complex. The sequence is that of Dynein light chain Tctex-type (Dlc90F) from Drosophila melanogaster (Fruit fly).